The following is a 367-amino-acid chain: tRNA-specific 2-thiouridylase MnmA (367 aa).

ATP contacts are provided by residues 13 to 20 (GLSGGVDS) and M39. An interaction with target base in tRNA region spans residues 99–101 (NPD). Catalysis depends on C104, which acts as the Nucleophile. C104 and C200 are disulfide-bonded. G128 provides a ligand contact to ATP. Positions 150-152 (KDQ) are interaction with tRNA. The active-site Cysteine persulfide intermediate is the C200. The segment at 307 to 308 (RY) is interaction with tRNA.

It belongs to the MnmA/TRMU family.

The protein resides in the cytoplasm. The catalysed reaction is S-sulfanyl-L-cysteinyl-[protein] + uridine(34) in tRNA + AH2 + ATP = 2-thiouridine(34) in tRNA + L-cysteinyl-[protein] + A + AMP + diphosphate + H(+). Its function is as follows. Catalyzes the 2-thiolation of uridine at the wobble position (U34) of tRNA, leading to the formation of s(2)U34. This Neisseria meningitidis serogroup A / serotype 4A (strain DSM 15465 / Z2491) protein is tRNA-specific 2-thiouridylase MnmA.